A 492-amino-acid polypeptide reads, in one-letter code: MTEHFDVVIVGAGISGISTAWHLQDRCPTKSYVILERRANIGGTWDLFKYPGIRSDSDMFTLGFRFKPWTSAKSIADGPSIWNYINEAAQENGIDKHIRTNHRVLGADWSDAENRWTITVEADGEQKQITASFLSVCSGYYNYDQGYSPEFPGADDFAGQIIHPQHWPEDLDYAGKKIVVIGSGATAVTLIPSLVNGGAAHVTMLQRSPTYIGSLPLVDPVAEKTNKYLPKNLAHFVNRWKAIAFSTAQYQLARKFPNYMRKTLMTMAQRRLPEGFDVQKHFGPRYNPWDERLCLAPNGDLFKTIRAGKADVVTDTIAKFTETGIKLTSGEELTADIIITATGLNMQLFGGASLTRNGQEVDLTETMTYKGLMLSGVPNMAITFGYTNASWTLKADLVSEFICRVLNYMDDNGFDRVEPQHPGDAVDALPFMDFNPGYFRRAMDSLPKSGSRAPWRLKQNYFFDLRMIRYDKVDEESLHFTKHRAAVSASSS.

FAD-binding positions include S15, E36, 44–47 (TWDL), D56, and V104. 54-56 (RSD) contacts NADP(+). Residues 183 to 189 (SGATAVT) and 207 to 208 (RS) each bind NADP(+).

The protein belongs to the FAD-binding monooxygenase family. FAD is required as a cofactor.

It is found in the cell membrane. The enzyme catalyses ethionamide + NADPH + O2 + H(+) = ethionamide S-oxide + NADP(+) + H2O. Monooxygenase able to convert a wide range of ketones to the corresponding esters or lactones via a Baeyer-Villiger oxidation reaction. Can act on long-chain aliphatic ketones (2-hexanone to 2-dodecanone) and on aromatic ketones (phenylacetone and benzylacetone). Is also able to catalyze enantioselective sulfoxidation of methyl-p-tolylsulfide. In vivo, likely functions as a BVMO, but the exact nature of the physiological substrate(s) remains to be established. Functionally, is responsible for the activation of several thiocarbamide-containing pro-drugs, such as ethionamide (ETH), isoxyl (ISO) and thiacetazone (TAC), into reactive species. This chain is FAD-containing monooxygenase EthA (ethA), found in Mycolicibacterium smegmatis (strain ATCC 700084 / mc(2)155) (Mycobacterium smegmatis).